The sequence spans 248 residues: Eukaryotic translation initiation factor 6 (248 aa).

It belongs to the eIF-6 family. Monomer. Associates with the 60S ribosomal subunit.

The protein localises to the cytoplasm. It localises to the nucleus. The protein resides in the nucleolus. In terms of biological role, binds to the 60S ribosomal subunit and prevents its association with the 40S ribosomal subunit to form the 80S initiation complex in the cytoplasm. May also be involved in ribosome biogenesis. The sequence is that of Eukaryotic translation initiation factor 6 from Trypanosoma cruzi (strain CL Brener).